The sequence spans 498 residues: WD repeat-containing protein 55 homolog (498 aa).

The interval 1–133 (MHTHNNFKTP…TFDLDEDDET (133 aa)) is disordered. Composition is skewed to acidic residues over residues 12-23 (DEDELDDLDEDM), 31-48 (IEQEVLNESDSDNDEYDL), and 83-95 (SDSDDSMLDDAGD). The segment covering 114–123 (PSGSNRQSEA) has biased composition (polar residues). WD repeat units follow at residues 155–194 (KLEDFITDICFHPDRDIIALATIIGDVHLYEYDNEANKLL), 199–238 (VHSKACRDVEFTEDGRFLLTCSKDKCVMVTDMETEKLKKL), 242–280 (AHDDAINTLHVLNENLFATGDDAGTVKLWDLRTKNAIFE), 283–322 (ELEDQITQLTTNDQSKLLLATSADGYLTTFNIAARKMYVQ), 325–364 (PYEEELSCMGIYRGDSKLVVGTSKGRLYTYNWGQFGYHCD), and 409–448 (QHNMPIESLDVNSNGELIASSSHNNDVRFWNVKYFEDFGD).

This sequence belongs to the WD repeat WDR55 family.

This Drosophila erecta (Fruit fly) protein is WD repeat-containing protein 55 homolog.